Here is a 582-residue protein sequence, read N- to C-terminus: Colicin-E9 (582 aa).

Disordered stretches follow at residues 1–74, 246–270, 294–321, 422–489, and 510–542; these read MSGG…SGGG, SPGV…NTRD, PDQV…EAAE, ADAA…IADK, and SKDP…QQVG. Positions 20-35 are enriched in gly residues; it reads INGGPTGIGVSGGASD. Positions 36-45 are enriched in low complexity; that stretch reads GSGWSSENNP. Gly residues predominate over residues 46–74; sequence WGGGSGSGIHWGGGSGRGNGGGNGNSGGG. Composition is skewed to basic and acidic residues over residues 297–321, 430–453, and 465–476; these read VKQR…EAAE, QERR…ESKR, and PVGDKWLDDAGK. Residues 516–529 are compositionally biased toward low complexity; it reads SKNLNPSNKSSVSK. 3 residues coordinate Zn(2+): H550, H575, and H579.

This sequence belongs to the colicin/pyosin nuclease family.

Its function is as follows. This plasmid-coded bactericidal protein is an endonuclease active on both single- and double-stranded DNA but with undefined specificity. In terms of biological role, colicins are polypeptide toxins produced by and active against E.coli and closely related bacteria. This is Colicin-E9 (col) from Escherichia coli.